We begin with the raw amino-acid sequence, 581 residues long: Arginine--tRNA ligase (581 aa).

The 'HIGH' region motif lies at 126-136; sequence PNLAKEMHVGH.

This sequence belongs to the class-I aminoacyl-tRNA synthetase family. In terms of assembly, monomer.

The protein resides in the cytoplasm. The enzyme catalyses tRNA(Arg) + L-arginine + ATP = L-arginyl-tRNA(Arg) + AMP + diphosphate. The chain is Arginine--tRNA ligase from Shewanella piezotolerans (strain WP3 / JCM 13877).